Reading from the N-terminus, the 206-residue chain is Large ribosomal subunit protein eL13y (206 aa).

Residues 182-206 are disordered; sequence LERTNKRHAGARAKRAADAEKEEKK. Basic residues predominate over residues 186–195; the sequence is NKRHAGARAK. Over residues 196 to 206 the composition is skewed to basic and acidic residues; it reads RAADAEKEEKK.

Belongs to the eukaryotic ribosomal protein eL13 family.

The polypeptide is Large ribosomal subunit protein eL13y (Brassica napus (Rape)).